We begin with the raw amino-acid sequence, 95 residues long: Scorpine-like peptide Smp76 (95 aa).

Positions Met-1 to Cys-19 are cleaved as a signal peptide. One can recognise a BetaSPN-type CS-alpha/beta domain in the interval Glu-55 to Tyr-95. 3 cysteine pairs are disulfide-bonded: Cys-58/Cys-82, Cys-68/Cys-87, and Cys-72/Cys-89.

In terms of processing, disulfide bonds are critical for antiviral function, and their disruption inhibit viral activity. Expressed by the venom gland.

It is found in the secreted. Antibacterial peptide. Dose-dependently inhibits Dengue virus (DENV), Zika virus (ZIKV) and Hepatitis C virus (HCV) infections. Two mechanisms of action have been described by two different groups: one involving activity on extracellular particles, and the other regulating the immune system. On Dengue virus (DENV), Zika virus (ZIKV), suppress the established viral infection, similar to the effect of interferon (IFN)-beta. Mechanistically, upregulates the expression of IFN-beta by activating interferon regulatory transcription factor 3 (IRF3) phosphorylation. On HCV and DENV, acts by inactivating extra-cellular infectious particles without affecting viral replication. Shows very weak inhibition on measles virus. Is neither toxic nor hemolytic in vitro at high concentrations. The protein is Scorpine-like peptide Smp76 of Scorpio palmatus (Israeli golden scorpion).